We begin with the raw amino-acid sequence, 1862 residues long: Ankyrin-1 (1862 aa).

The segment at 1-827 is 89 kDa domain; it reads MGFCKADAAT…DELVGSKAER (827 aa). ANK repeat units follow at residues 40–69, 73–102, 106–135, 139–168, 170–197, 201–230, 234–263, 267–296, 300–329, 333–362, 366–395, 399–428, 432–461, 465–494, 498–527, 531–560, 564–593, 597–626, 630–659, 663–692, 696–725, 729–758, and 762–791; these read NGLN…ILET, KGNT…NVNA, KGFT…NQNV, DGFT…KGKV, LPAL…NPDV, TGFT…SVNF, NGIT…QIET, DELT…PIQA, NGLS…EIDD, DHLT…KPNS, NGFT…SIDA, SGLT…SPNV, KVET…KANA, DDQT…SPNL, AGHT…SQAC, KGFT…HPNA, NGLT…SPHS, NGYT…SANA, QGVT…NGNL, SGLT…TVDA, MGYT…DVNA, LGYS…SPNE, and NGTT…ETSV. A Phosphoserine modification is found at K55. The residue at position 101 (N101) is a (3S)-3-hydroxyasparagine; by HIF1AN; partial. A (3S)-3-hydroxyasparagine; by HIF1AN modification is found at N229. At S425 the chain carries Phosphoserine. Residues N427 and N460 each carry the (3S)-3-hydroxyasparagine; by HIF1AN modification. Residues N625 and N658 each carry the (3S)-3-hydroxyasparagine; by HIF1AN modification. D691 is subject to (3S)-3-hydroxyaspartate; by HIF1AN. Position 724 is a (3S)-3-hydroxyasparagine; by HIF1AN (N724). S755 bears the Phosphoserine mark. Position 757 is a (3S)-3-hydroxyasparagine; by HIF1AN (N757). A phosphoserine mark is found at S777, S813, S830, and S852. The interval 812-834 is disordered; that stretch reads VSEDEGDELVGSKAERRDSRDVG. Residues 824–834 are compositionally biased toward basic and acidic residues; it reads KAERRDSRDVG. At T862 the chain carries Phosphothreonine. Positions 872–900 are disordered; sequence DQEQASKEYDEDSLIPSSPATETSDNISP. Polar residues predominate over residues 886 to 900; the sequence is IPSSPATETSDNISP. 2 ZU5 domains span residues 909 to 1064 and 1066 to 1212; these read FLVS…IMSR and CQDY…LSDC. The residue at position 957 (T957) is a Phosphothreonine. Y1069 bears the Phosphotyrosine mark. At S1078 the chain carries Phosphoserine. The tract at residues 1197–1331 is UPA domain; it reads ANFTTNVSAR…PVKVRDSSRE (135 aa). Phosphothreonine occurs at positions 1374 and 1376. Phosphoserine is present on residues S1386 and S1388. Positions 1387-1862 are 55 kDa regulatory domain; the sequence is ESRLGFTSDT…KRASLKRGKQ (476 aa). At T1396 the chain carries Phosphothreonine. The 85-residue stretch at 1399–1483 folds into the Death domain; sequence VEMRMAVIRE…EIVNMLEGSG (85 aa). 3 positions are modified to phosphoserine: S1424, S1473, and S1482. A disordered region spans residues 1481–1506; the sequence is GSGRQSRNLKPERRHGDREYSLSPSQ. Over residues 1489–1500 the composition is skewed to basic and acidic residues; the sequence is LKPERRHGDREY. 3 positions are modified to phosphoserine: S1519, S1529, and S1612. Disordered stretches follow at residues 1598–1720 and 1744–1767; these read EGAH…GPHS and VSTR…KEPS. The segment covering 1637 to 1647 has biased composition (basic and acidic residues); it reads EGQRSEKKRQE. Residues 1648 to 1666 show a composition bias toward polar residues; it reads VSGTEQDTETEVSLVSGQQ. Residues S1660, S1675, and S1685 each carry the phosphoserine modification. Over residues 1681 to 1694 the composition is skewed to basic and acidic residues; the sequence is VLDRSQARTLDWDK. The segment covering 1695 to 1720 has biased composition (polar residues); that stretch reads QGSTAVHPQEATQSSWQEEVTQGPHS.

In terms of assembly, component of the ankyrin-1 complex in the erythrocyte, composed of ANK1, RHCE, RHAG, SLC4A1, EPB42, GYPA, GYPB and AQP1. Interacts with a number of integral membrane proteins and cytoskeletal proteins. Interacts (via N-terminus) with SPTB/spectrin (beta chain). Also interacts with TTN/titin. Isoform Mu17 interacts with OBSCN isoform 3/obscurin. Interacts with HIF1AN. Interacts (via ANK 1-5 repeats) with RHCE; this interaction mediates the primary membrane attachment site for ANK1. Interacts (via ANK 1-2 repeats) with AQP1 (via the N-terminal). Interacts (via ANK 1-13 repeats) with EPB42. Interacts directly with SLC4A1 (via the cytoplasmic domain); this interaction is mediated by the SLC4A1 Band 3-II and Band 3-III dimers. Regulated by phosphorylation. Post-translationally, acylated by palmitic acid group(s). In terms of processing, hydroxylated by HIF1AN at several asparagine and 1 aspartate residue within ANK repeat region; hydroxylation seems to increase the conformational stability of this region and may also modulate protein-protein interactions mediated by the ANK repeat region.

Its subcellular location is the cytoplasm. The protein resides in the cytoskeleton. The protein localises to the membrane. It is found in the sarcoplasmic reticulum. In terms of biological role, component of the ankyrin-1 complex, a multiprotein complex involved in the stability and shape of the erythrocyte membrane. Attaches integral membrane proteins to cytoskeletal elements; binds to the erythrocyte membrane protein band 4.2, to Na-K ATPase, to the lymphocyte membrane protein GP85, and to the cytoskeletal proteins fodrin, tubulin, vimentin and desmin. Erythrocyte ankyrins also link spectrin (beta chain) to the cytoplasmic domain of the erythrocytes anion exchange protein; they retain most or all of these binding functions. The protein is Ankyrin-1 of Mus musculus (Mouse).